The sequence spans 1801 residues: Sperm flagellar protein 2 (1801 aa).

Residues 1–105 (MSEILCQWLN…LLYQLYIALQ (105 aa)) form the Calponin-homology (CH) domain. 2 coiled-coil regions span residues 176–260 (EKFE…KDLQ) and 321–395 (AHEA…TKQA). The disordered stretch occupies residues 632 to 659 (QDKNELTDTQVPGEAAPQKEGTKSSDFE). Coiled-coil stretches lie at residues 722-748 (NQAK…KAQM) and 869-895 (ATEV…SAVS). 2 stretches are compositionally biased toward basic and acidic residues: residues 883-892 (LEEKETEKKS) and 909-918 (EAEKEKEVHQ). The segment at 883 to 949 (LEEKETEKKS…KISVKKSPID (67 aa)) is disordered. Residues 1051 to 1077 (EDLWEDEETKAELHQRVNDLRDRLWDI) adopt a coiled-coil conformation. 2 stretches are compositionally biased toward basic and acidic residues: residues 1233–1250 (RLAE…KEKS) and 1261–1295 (KEKE…AEKK). Disordered stretches follow at residues 1233–1304 (RLAE…SPVV), 1651–1695 (KTSI…NANT), and 1781–1801 (SEHA…DEKK). Residues 1252-1286 (QSGTNKKAKKEKEQAKKEKEQAKKEKEQAKKEKEP) adopt a coiled-coil conformation. Residues 1305 to 1657 (EVSPVTITPE…TAEKTSISSV (353 aa)) form an interaction with IFT20 region. A coiled-coil region spans residues 1665-1695 (EAEENSTREELKEEKDERDQKEEEIPENANT). The segment covering 1669–1687 (NSTREELKEEKDERDQKEE) has biased composition (basic and acidic residues).

In terms of assembly, interacts (via C-terminus) with IFT20. Interacts with DYNC1I2. In terms of tissue distribution, predominantly expressed in ciliated tissues such as lung, trachea, testis, brain, and at lower levels in kidney and spleen.

It localises to the cell projection. The protein localises to the cilium. It is found in the flagellum. The protein resides in the cytoplasm. Its subcellular location is the golgi apparatus. Required for correct axoneme development in spermatozoa. Important for normal development of the manchette and sperm head morphology. Essential for male fertility. Plays a role in localization of the intraflagellar transport protein IFT20 to the manchette, suggesting function as an adapter for dynein-mediated protein transport during spermatogenesis. Also plays a role in bone growth where it seems to be required for normal osteoblast differentiation. This Rattus norvegicus (Rat) protein is Sperm flagellar protein 2 (Spef2).